A 154-amino-acid chain; its full sequence is MAARLCCQLDTSRDVLCLRPVGAESCGRPFSGPLRALPPSHPSALPTDYGAHLSLRGLPVCAFSSAGPCALRFTSARCMETTVNAPRNLPKVLHKRTLGLSAMSTTKIETYFKDCVFKDWEELGEEIRLKVFVLGGCRHKLVCTPAPCNFFTSA.

Positions 68–117 (PCALRFTSARCMETTVNAPRNLPKVLHKRTLGLSAMSTTKIETYFKDCVF) are mitochondrial targeting sequence.

The protein belongs to the orthohepadnavirus protein X family. As to quaternary structure, may form homodimer. May interact with host CEBPA, CFLAR, CREB1, DDB1, E4F1, HBXIP, HSPD1/HSP60, NFKBIA, POLR2E and SMAD4. Interacts with host SMC5-SMC6 complex and induces its degradation. Interacts with host TRPC4AP; leading to prevent ubiquitination of TRPC4AP. Interacts with host PLSCR1; this interaction promotes ubiquitination and degradation of HBx and impairs HBx-mediated cell proliferation. Post-translationally, a fraction may be phosphorylated in insect cells and HepG2 cells, a human hepatoblastoma cell line. Phosphorylated in vitro by host protein kinase C or mitogen-activated protein kinase. N-acetylated in insect cells.

The protein resides in the host cytoplasm. It localises to the host nucleus. It is found in the host mitochondrion. Its function is as follows. Multifunctional protein that plays a role in silencing host antiviral defenses and promoting viral transcription. Does not seem to be essential for HBV infection. May be directly involved in development of cirrhosis and liver cancer (hepatocellular carcinoma). Most of cytosolic activities involve modulation of cytosolic calcium. The effect on apoptosis is controversial depending on the cell types in which the studies have been conducted. May induce apoptosis by localizing in mitochondria and causing loss of mitochondrial membrane potential. May also modulate apoptosis by binding host CFLAR, a key regulator of the death-inducing signaling complex (DISC). Promotes viral transcription by using the host E3 ubiquitin ligase DDB1 to target the SMC5-SMC6 complex to proteasomal degradation. This host complex would otherwise bind to viral episomal DNA, and prevents its transcription. Moderately stimulates transcription of many different viral and cellular transcription elements. Promoters and enhancers stimulated by HBx contain DNA binding sites for NF-kappa-B, AP-1, AP-2, c-EBP, ATF/CREB, or the calcium-activated factor NF-AT. This Chimpanzee hepatitis B virus (isolate United Kingdom/LSH/1988) (HBVcpz) protein is Protein X.